The chain runs to 620 residues: Endoglucanase 21 (620 aa).

The disordered stretch occupies residues 1–39 (MYGRDPWGGPLEINAADSMTDDDRSRNLQDLDRATPSRP). At 1 to 70 (MYGRDPWGGP…DLGCILVSRK (70 aa)) the chain is on the cytoplasmic side. Residues 21–39 (DDDRSRNLQDLDRATPSRP) are compositionally biased toward basic and acidic residues. Residues 71 to 91 (IFLWTLGTIVVTALLSGFITL) traverse the membrane as a helical; Signal-anchor for type II membrane protein segment. The Extracellular portion of the chain corresponds to 92 to 620 (IVKTLPHHHH…TPPPPAPWTP (529 aa)). 2 N-linked (GlcNAc...) asparagine glycosylation sites follow: N108 and N134. D166 serves as the catalytic Nucleophile. N-linked (GlcNAc...) asparagine glycosylation is found at N217, N325, N346, N409, N426, and N482. Active-site residues include H514 and D561. Residue N567 is glycosylated (N-linked (GlcNAc...) asparagine). The active site involves E570.

The protein belongs to the glycosyl hydrolase 9 (cellulase E) family. Expressed in conductive tissues of young roots, cotyledons, rosette leaves, cauline leaves and sepals. Expressed in the leaf trichome support cells.

It is found in the cell membrane. It carries out the reaction Endohydrolysis of (1-&gt;4)-beta-D-glucosidic linkages in cellulose, lichenin and cereal beta-D-glucans.. The protein is Endoglucanase 21 (KOR3) of Arabidopsis thaliana (Mouse-ear cress).